The primary structure comprises 254 residues: 3-deoxy-manno-octulosonate cytidylyltransferase (254 aa).

This sequence belongs to the KdsB family.

Its subcellular location is the cytoplasm. The catalysed reaction is 3-deoxy-alpha-D-manno-oct-2-ulosonate + CTP = CMP-3-deoxy-beta-D-manno-octulosonate + diphosphate. Its pathway is nucleotide-sugar biosynthesis; CMP-3-deoxy-D-manno-octulosonate biosynthesis; CMP-3-deoxy-D-manno-octulosonate from 3-deoxy-D-manno-octulosonate and CTP: step 1/1. It participates in bacterial outer membrane biogenesis; lipopolysaccharide biosynthesis. Its function is as follows. Activates KDO (a required 8-carbon sugar) for incorporation into bacterial lipopolysaccharide in Gram-negative bacteria. This is 3-deoxy-manno-octulosonate cytidylyltransferase from Haemophilus influenzae (strain PittGG).